The chain runs to 123 residues: uncharacterized protein (123 aa).

Disordered stretches follow at residues 1-33 (MAPP…RRRK) and 82-123 (EKAA…EDKS). A compositionally biased stretch (basic residues) spans 18 to 33 (KLFKRRRVLSRDRRRK).

This is an uncharacterized protein from Mus musculus (Mouse).